The chain runs to 77 residues: U8-lycotoxin-Ls1q (77 aa).

Positions Met1–Ala20 are cleaved as a signal peptide. A propeptide spanning residues Gln21–Lys26 is cleaved from the precursor.

Belongs to the neurotoxin 19 (CSTX) family. 08 (U8-Lctx) subfamily. In terms of processing, contains 4 disulfide bonds. As to expression, expressed by the venom gland.

The protein resides in the secreted. The polypeptide is U8-lycotoxin-Ls1q (Lycosa singoriensis (Wolf spider)).